Reading from the N-terminus, the 305-residue chain is Oxygen-dependent coproporphyrinogen-III oxidase (305 aa).

S99 serves as a coordination point for substrate. A divalent metal cation-binding residues include H103 and H113. H113 serves as the catalytic Proton donor. Residue 115-117 (NVR) participates in substrate binding. Positions 152 and 182 each coordinate a divalent metal cation. Positions 247-282 (YVEFNLVLDRGTLFGLQTGGRTESILMSMPPLARWE) are important for dimerization. 265–267 (GGR) contacts substrate.

The protein belongs to the aerobic coproporphyrinogen-III oxidase family. In terms of assembly, homodimer. A divalent metal cation is required as a cofactor.

Its subcellular location is the cytoplasm. The catalysed reaction is coproporphyrinogen III + O2 + 2 H(+) = protoporphyrinogen IX + 2 CO2 + 2 H2O. It functions in the pathway porphyrin-containing compound metabolism; protoporphyrin-IX biosynthesis; protoporphyrinogen-IX from coproporphyrinogen-III (O2 route): step 1/1. In terms of biological role, involved in the heme biosynthesis. Catalyzes the aerobic oxidative decarboxylation of propionate groups of rings A and B of coproporphyrinogen-III to yield the vinyl groups in protoporphyrinogen-IX. The chain is Oxygen-dependent coproporphyrinogen-III oxidase from Vibrio cholerae serotype O1 (strain ATCC 39541 / Classical Ogawa 395 / O395).